The chain runs to 82 residues: MKEYGNEIELIEFIVKSLVDKEDEVKLNVIEGEKSTILELRVSQSDVGKIIGRRGRIARAIRTLLGACAAKTNRRVQLEILD.

The region spanning 35–82 (STILELRVSQSDVGKIIGRRGRIARAIRTLLGACAAKTNRRVQLEILD) is the KH domain.

It belongs to the KhpA RNA-binding protein family. As to quaternary structure, forms a complex with KhpB.

It localises to the cytoplasm. A probable RNA chaperone. Forms a complex with KhpB which binds to cellular RNA and controls its expression. Plays a role in peptidoglycan (PG) homeostasis and cell length regulation. This chain is RNA-binding protein KhpA, found in Borreliella burgdorferi (strain ATCC 35210 / DSM 4680 / CIP 102532 / B31) (Borrelia burgdorferi).